Consider the following 283-residue polypeptide: Thymidylate synthase (283 aa).

DUMP is bound at residue Arg22. Catalysis depends on Cys160, which acts as the Nucleophile. DUMP-binding positions include 180–183 (RSCD), Asn191, and 221–223 (HIY). A (6R)-5,10-methylene-5,6,7,8-tetrahydrofolate-binding site is contributed by Asp183. Residue Ser282 coordinates (6R)-5,10-methylene-5,6,7,8-tetrahydrofolate.

Belongs to the thymidylate synthase family. Bacterial-type ThyA subfamily. In terms of assembly, homodimer.

The protein localises to the cytoplasm. The enzyme catalyses dUMP + (6R)-5,10-methylene-5,6,7,8-tetrahydrofolate = 7,8-dihydrofolate + dTMP. It functions in the pathway pyrimidine metabolism; dTTP biosynthesis. Its function is as follows. Catalyzes the reductive methylation of 2'-deoxyuridine-5'-monophosphate (dUMP) to 2'-deoxythymidine-5'-monophosphate (dTMP) while utilizing 5,10-methylenetetrahydrofolate (mTHF) as the methyl donor and reductant in the reaction, yielding dihydrofolate (DHF) as a by-product. This enzymatic reaction provides an intracellular de novo source of dTMP, an essential precursor for DNA biosynthesis. This chain is Thymidylate synthase, found in Haemophilus influenzae (strain PittGG).